We begin with the raw amino-acid sequence, 235 residues long: Probable queuosine precursor transporter (235 aa).

6 helical membrane-spanning segments follow: residues 17-37 (IIWL…FVQI), 56-76 (FHST…DLTV), 87-107 (IIFV…VLFS), 127-147 (IAIA…IVFN), 155-175 (WWVA…FVFF), and 201-221 (FKLF…LNVI).

Belongs to the vitamin uptake transporter (VUT/ECF) (TC 2.A.88) family. Q precursor transporter subfamily.

The protein resides in the cell inner membrane. Functionally, involved in the import of queuosine (Q) precursors, required for Q precursor salvage. The sequence is that of Probable queuosine precursor transporter from Haemophilus influenzae (strain ATCC 51907 / DSM 11121 / KW20 / Rd).